Here is a 502-residue protein sequence, read N- to C-terminus: Cytochrome P450 monooxygenase prhN (502 aa).

Residues 14–30 traverse the membrane as a helical segment; the sequence is SGALLIVGILLLRWALW. Asn-165 is a glycosylation site (N-linked (GlcNAc...) asparagine). Cys-443 is a heme binding site. N-linked (GlcNAc...) asparagine glycosylation occurs at Asn-474.

This sequence belongs to the cytochrome P450 family. It depends on heme as a cofactor.

It is found in the membrane. It functions in the pathway secondary metabolite biosynthesis; terpenoid biosynthesis. In terms of biological role, cytochrome P450 monooxygenase; part of the gene cluster that mediates the biosynthesis of paraherquonin, a meroterpenoid with a unique, highly congested hexacyclic molecular architecture. The first step of the pathway is the synthesis of 3,5-dimethylorsellinic acid (DMOA) by the polyketide synthase prhL. Synthesis of DMOA is followed by farnesylation by the prenyltransferase prhE, methylesterification by the methyl-transferase prhM, epoxidation of the prenyl chain by the flavin-dependent monooxygenase prhF, and cyclization of the farnesyl moiety by the terpene cyclase prhH, to yield the tetracyclic intermediate, protoaustinoid A. The short chain dehydrogenase prhI then oxidizes the C-3 alcohol group of the terpene cyclase product to transform protoaustinoid A into protoaustinoid B. The FAD-binding monooxygenase prhJ catalyzes the oxidation of protoaustinoid B into preaustinoid A which is further oxidized into preaustinoid A1 by FAD-binding monooxygenase phrK. Finally, prhA leads to berkeleydione via the berkeleyone B intermediate. PrhA is a multifunctional dioxygenase that first desaturates at C5-C6 to form berkeleyone B, followed by rearrangement of the A/B-ring to form the cycloheptadiene moiety in berkeleydione. Berkeleydione serves as the key intermediate for the biosynthesis of paraherquonin as well as many other meroterpenoids. The cytochrome P450 monooxygenases prhB, prhD, and prhN, as well as the isomerase prhC, are probably involved in the late stage of paraherquonin biosynthesis, after the production of berkeleydione. Especially prhC might be a multifunctional enzyme that catalyzes the D-ring expansion via intramolecular methoxy rearrangement, as well as the hydrolysis of the expanded D-ring. The polypeptide is Cytochrome P450 monooxygenase prhN (Penicillium brasilianum).